The primary structure comprises 213 residues: Validoxylamine A 7'-phosphate phosphatase (213 aa).

Aspartate 8 serves as the catalytic Nucleophile. A divalent metal cation-binding residues include aspartate 8 and aspartate 10. Substrate is bound by residues 8 to 10 (DLD), 107 to 108 (TS), and lysine 140. The active-site Proton donor is the aspartate 10. Aspartate 165 provides a ligand contact to a divalent metal cation.

Belongs to the HAD-like hydrolase superfamily. CbbY/CbbZ/Gph/YieH family. The cofactor is Mg(2+). Mn(2+) serves as cofactor. Requires Co(2+) as cofactor.

The enzyme catalyses validoxylamine A 7'-phosphate + H2O = validoxylamine A + phosphate. In terms of biological role, involved in the biosynthesis of the antifungal agent validamycin A. Catalyzes the dephosphorylation of validoxylamine A 7'-phosphate to yield validoxylamine A. VldH is also able to convert trehalose 6-phosphate to trehalose. In Streptomyces hygroscopicus subsp. limoneus, this protein is Validoxylamine A 7'-phosphate phosphatase.